A 70-amino-acid polypeptide reads, in one-letter code: MIDYPININNVSGNSVINVGGAFMIRPLTLSKSVFGSGGLNTGIVFENNFVSKAKMINHQFTDQNVTKTF.

It belongs to the GerPA/GerPF family.

The chain is Spore germination protein-like protein YpzD (ypzD) from Bacillus subtilis (strain 168).